The sequence spans 292 residues: Manganese transport system membrane protein MntC (292 aa).

8 helical membrane passes run 20 to 40, 58 to 78, 96 to 116, 137 to 157, 168 to 188, 190 to 210, 226 to 246, and 249 to 269; these read ALTA…FIIL, VVIA…TGVI, SAIG…ITGM, TDLW…ILFY, VMAQ…MLLL, LVTV…MLIT, LCLA…FSVI, and VASG…AFFF.

This sequence belongs to the ABC-3 integral membrane protein family.

It is found in the cell membrane. Its function is as follows. This protein is probably a component of a manganese permease, a binding protein-dependent, ATP-driven transport system. The protein is Manganese transport system membrane protein MntC (mntC) of Halalkalibacterium halodurans (strain ATCC BAA-125 / DSM 18197 / FERM 7344 / JCM 9153 / C-125) (Bacillus halodurans).